The following is a 472-amino-acid chain: Bone morphogenetic protein 3 (472 aa).

An N-terminal signal peptide occupies residues 1–22 (MAGASRLLFLWLGCFCVSLAQG). Residues 23 to 362 (ERPKPPFPEL…EQTLKKARRK (340 aa)) constitute a propeptide that is removed on maturation. A compositionally biased stretch (basic and acidic residues) spans 27–37 (PPFPELRKAVP). A disordered region spans residues 27–53 (PPFPELRKAVPGDRTAGGGPDSELQPQ). N-linked (GlcNAc...) asparagine glycosylation is found at asparagine 117, asparagine 141, asparagine 175, and asparagine 220. The interval 320 to 350 (PYKTLQAQAPEKSKNKKKQRKGPHRKSQTLQ) is disordered. Positions 333 to 346 (KNKKKQRKGPHRKS) are enriched in basic residues. 3 disulfides stabilise this stretch: cysteine 370-cysteine 437, cysteine 399-cysteine 469, and cysteine 403-cysteine 471. N-linked (GlcNAc...) asparagine glycosylation is present at asparagine 463.

It belongs to the TGF-beta family. Homodimer; disulfide-linked. Interacts with type II receptor ACVR2B. As to expression, expressed in adult and fetal cartilage.

The protein resides in the secreted. Growth factor of the TGF-beta superfamily that plays an essential role in developmental process by inducing and patterning early skeletal formation and by negatively regulating bone density. Antagonizes the ability of certain osteogenic BMPs to induce osteoprogenitor differentiation and ossification. Initiates signaling cascades by associating with type II receptor ACVR2B to activate SMAD2-dependent and SMAD-independent signaling cascades including TAK1 and JNK pathways. This Homo sapiens (Human) protein is Bone morphogenetic protein 3 (BMP3).